A 101-amino-acid chain; its full sequence is Small ribosomal subunit protein uS14 (101 aa).

Belongs to the universal ribosomal protein uS14 family. In terms of assembly, part of the 30S ribosomal subunit. Contacts proteins S3 and S10.

Binds 16S rRNA, required for the assembly of 30S particles and may also be responsible for determining the conformation of the 16S rRNA at the A site. The sequence is that of Small ribosomal subunit protein uS14 from Nitrosomonas europaea (strain ATCC 19718 / CIP 103999 / KCTC 2705 / NBRC 14298).